A 313-amino-acid chain; its full sequence is Small ribosomal subunit protein uS2 (313 aa).

Positions 234–243 (DEEAKEEKTK) are enriched in basic and acidic residues. Positions 234 to 313 (DEEAKEEKTK…ASKAEAEEGK (80 aa)) are disordered. Basic residues predominate over residues 244–256 (AKTTAKKVVTKKA). Basic and acidic residues predominate over residues 266 to 297 (AEKKSEKPTTEKRPTKEAAETKETSEEPKTKE).

Belongs to the universal ribosomal protein uS2 family.

The chain is Small ribosomal subunit protein uS2 from Coxiella burnetii (strain Dugway 5J108-111).